The sequence spans 264 residues: tRNA pseudouridine synthase A (264 aa).

Aspartate 51 (nucleophile) is an active-site residue. Tyrosine 109 contributes to the substrate binding site.

It belongs to the tRNA pseudouridine synthase TruA family. As to quaternary structure, homodimer.

The catalysed reaction is uridine(38/39/40) in tRNA = pseudouridine(38/39/40) in tRNA. In terms of biological role, formation of pseudouridine at positions 38, 39 and 40 in the anticodon stem and loop of transfer RNAs. In Pasteurella multocida (strain Pm70), this protein is tRNA pseudouridine synthase A.